The chain runs to 200 residues: ATP-dependent Clp protease proteolytic subunit (200 aa).

Catalysis depends on S99, which acts as the Nucleophile. H124 is an active-site residue.

The protein belongs to the peptidase S14 family. In terms of assembly, fourteen ClpP subunits assemble into 2 heptameric rings which stack back to back to give a disk-like structure with a central cavity, resembling the structure of eukaryotic proteasomes.

The protein resides in the cytoplasm. The enzyme catalyses Hydrolysis of proteins to small peptides in the presence of ATP and magnesium. alpha-casein is the usual test substrate. In the absence of ATP, only oligopeptides shorter than five residues are hydrolyzed (such as succinyl-Leu-Tyr-|-NHMec, and Leu-Tyr-Leu-|-Tyr-Trp, in which cleavage of the -Tyr-|-Leu- and -Tyr-|-Trp bonds also occurs).. In terms of biological role, cleaves peptides in various proteins in a process that requires ATP hydrolysis. Has a chymotrypsin-like activity. Plays a major role in the degradation of misfolded proteins. The sequence is that of ATP-dependent Clp protease proteolytic subunit from Syntrophomonas wolfei subsp. wolfei (strain DSM 2245B / Goettingen).